The sequence spans 680 residues: MNFETSRCATLQYCPDPYIQRFVETPAHFSWKESYYRSTMSQSTQTNEFLSPEVFQHIWDFLEQPICSVQPIDLNFVDEPSEDGATNKIEISMDCIRMQDSDLSDPMWPQYTNLGLLNSMDQQIQNGSSSTSPYNTDHAQNSVTAPSPYAQPSSTFDALSPSPAIPSNTDYPGPHSFDVSFQQSSTAKSATWTYSTELKKLYCQIAKTCPIQIKVMTPPPQGAVIRAMPVYKKAEHVTEVVKRCPNHELSREFNEGQIAPPSHLIRVEGNSHAQYVEDPITGRQSVLVPYEPPQVGTEFTTVLYNFMCNSSCVGGMNRRPILIIVTLETRDGQVLGRRCFEARICACPGRDRKADEDSIRKQQVSDSTKNGDGTKRPFRQNTHGIQMTSIKKRRSPDDELLYLPVRGRETYEMLLKIKESLELMQYLPQHTIETYRQQQQQQHQHLLQKQTSIQSPSSYGNSSPPLNKMNSMNKLPSVSQLINPQQRNALTPTTIPDGMGANIPMMGTHMPMAGDMNGLSPTQALPPPLSMPSTSHCTPPPPYPTDCSIVSFLARLGCSSCLDYFTTQGLTTIYQIEHYSMDDLASLKIPEQFRHAIWKGILDHRQLHEFSSPSHLLRTPSSASTVSVGSSETRGERVIDAVRFTLRQTISFPPRDEWNDFNFDMDARRNKQQRIKEEGE.

A transcription activation region spans residues 1-107 (MNFETSRCAT…MQDSDLSDPM (107 aa)). Residues 123–157 (QIQNGSSSTSPYNTDHAQNSVTAPSPYAQPSSTFD) are compositionally biased toward polar residues. Positions 123-171 (QIQNGSSSTSPYNTDHAQNSVTAPSPYAQPSSTFDALSPSPAIPSNTDY) are disordered. A DNA-binding region spans residues 170–362 (DYPGPHSFDV…KADEDSIRKQ (193 aa)). Residues cysteine 244, histidine 247, cysteine 308, and cysteine 312 each coordinate Zn(2+). Basic and acidic residues predominate over residues 351–360 (DRKADEDSIR). 2 disordered regions span residues 351-393 (DRKA…IKKR) and 435-472 (YRQQ…MNSM). Residues 352–388 (RKADEDSIRKQQVSDSTKNGDGTKRPFRQNTHGIQMT) form an interaction with HIPK2 region. 2 stretches are compositionally biased toward polar residues: residues 361–371 (KQQVSDSTKNG) and 379–389 (RQNTHGIQMTS). Residues 394-443 (RSPDDELLYLPVRGRETYEMLLKIKESLELMQYLPQHTIETYRQQQQQQH) form an oligomerization region. Residues 437–450 (QQQQQQHQHLLQKQ) show a composition bias toward low complexity. Positions 451–472 (TSIQSPSSYGNSSPPLNKMNSM) are enriched in polar residues. The 67-residue stretch at 541–607 (PPYPTDCSIV…WKGILDHRQL (67 aa)) folds into the SAM domain. Positions 610 to 680 (FSSPSHLLRT…KQQRIKEEGE (71 aa)) are transactivation inhibition. Lysine 676 is covalently cross-linked (Glycyl lysine isopeptide (Lys-Gly) (interchain with G-Cter in SUMO)).

It belongs to the p53 family. As to quaternary structure, binds DNA as a homotetramer. Isoform composition of the tetramer may determine transactivation activity. Isoforms Alpha and Gamma interact with HIPK2. Interacts with SSRP1, leading to stimulate coactivator activity. Isoform 1 and isoform 2 interact with WWP1. Interacts with PDS5A. Isoform 5 (via activation domain) interacts with NOC2L. Zn(2+) is required as a cofactor. May be sumoylated. Post-translationally, ubiquitinated. Polyubiquitination involves WWP1 and leads to proteasomal degradation of this protein. As to expression, widely expressed, notably in heart, kidney, placenta, prostate, skeletal muscle, testis and thymus, although the precise isoform varies according to tissue type. Progenitor cell layers of skin, breast, eye and prostate express high levels of DeltaN-type isoforms. Isoform 10 is predominantly expressed in skin squamous cell carcinomas, but not in normal skin tissues.

It is found in the nucleus. Functionally, acts as a sequence specific DNA binding transcriptional activator or repressor. The isoforms contain a varying set of transactivation and auto-regulating transactivation inhibiting domains thus showing an isoform specific activity. Isoform 2 activates RIPK4 transcription. May be required in conjunction with TP73/p73 for initiation of p53/TP53 dependent apoptosis in response to genotoxic insults and the presence of activated oncogenes. Involved in Notch signaling by probably inducing JAG1 and JAG2. Plays a role in the regulation of epithelial morphogenesis. The ratio of DeltaN-type and TA*-type isoforms may govern the maintenance of epithelial stem cell compartments and regulate the initiation of epithelial stratification from the undifferentiated embryonal ectoderm. Required for limb formation from the apical ectodermal ridge. Activates transcription of the p21 promoter. This chain is Tumor protein 63 (TP63), found in Homo sapiens (Human).